Consider the following 101-residue polypeptide: Large ribosomal subunit protein uL23 (101 aa).

The protein belongs to the universal ribosomal protein uL23 family. Part of the 50S ribosomal subunit. Contacts protein L29, and trigger factor when it is bound to the ribosome.

Its function is as follows. One of the early assembly proteins it binds 23S rRNA. One of the proteins that surrounds the polypeptide exit tunnel on the outside of the ribosome. Forms the main docking site for trigger factor binding to the ribosome. This is Large ribosomal subunit protein uL23 from Leptospira biflexa serovar Patoc (strain Patoc 1 / Ames).